The following is a 1529-amino-acid chain: ABC multidrug transporter AFR2 (1529 aa).

Over residues 1–10 (MAFAGVGQGL) the composition is skewed to gly residues. The segment at 1 to 21 (MAFAGVGQGLGTYDRTEQTSG) is disordered. Residues 144 to 394 (GALRDLISNR…FVDMGFHCPS (251 aa)) enclose the ABC transporter 1 domain. Asn-235 and Asn-318 each carry an N-linked (GlcNAc...) asparagine glycan. The next 5 helical transmembrane spans lie at 505–525 (LTLT…SVFY), 539–559 (ALLF…ILIL), 589–609 (IPYK…MTNL), 614–634 (GPYF…SMLF), and 648–668 (LAPA…AVNV). A glycan (N-linked (GlcNAc...) asparagine) is linked at Asn-742. The chain crosses the membrane as a helical span at residues 757 to 777 (GILIGFFLFFTAIYMTATEFI). The ABC transporter 2 domain maps to 845–1087 (FSWKDVVYDI…ILIDYFEKNG (243 aa)). 881–888 (GVSGAGKT) is an ATP binding site. The next 5 helical transmembrane spans lie at 1193-1213 (YIWS…FSFF), 1227-1247 (FSVF…MPNF), 1268-1288 (IFIL…GAVI), 1314-1334 (LMFL…IMIV), and 1353-1373 (MCLI…FWMF). N-linked (GlcNAc...) asparagine glycosylation is present at Asn-1434. Residues 1465-1485 (FGLLWAYVVFNIIAAVGIYWL) form a helical membrane-spanning segment. The interval 1493-1529 (GKEQASEPEGVQEKLVPAQSSEKKRESVSRGSESTAA) is disordered.

It belongs to the ABC transporter superfamily. ABCG family. PDR (TC 3.A.1.205) subfamily.

Its subcellular location is the cell membrane. It catalyses the reaction itraconazole(in) + ATP + H2O = itraconazole(out) + ADP + phosphate + H(+). The enzyme catalyses voriconazole(in) + ATP + H2O = voriconazole(out) + ADP + phosphate + H(+). It carries out the reaction fluconazole(in) + ATP + H2O = fluconazole(out) + ADP + phosphate + H(+). Pleiotropic ABC efflux transporter that confers resistance to structurally and functionally unrelated compounds including azoles such as fluconazole (FLC), itraconazole (ITC), posaconazole (POS), and voriconazole (VRC). This chain is ABC multidrug transporter AFR2, found in Cryptococcus neoformans var. grubii serotype A (strain H99 / ATCC 208821 / CBS 10515 / FGSC 9487) (Filobasidiella neoformans var. grubii).